The chain runs to 511 residues: Cytochrome P450 705A5 (511 aa).

The helical transmembrane segment at 12-30 (CFIFLLLCLFSRLSYDLFF) threads the bilayer. Position 454 (Cys-454) interacts with heme.

Belongs to the cytochrome P450 family. It depends on heme as a cofactor. In terms of tissue distribution, expressed primarily in the root epidermis.

The protein resides in the membrane. In terms of biological role, converts thalian-diol to a desaturated thalian-diol. The polypeptide is Cytochrome P450 705A5 (CYP705A5) (Arabidopsis thaliana (Mouse-ear cress)).